Consider the following 373-residue polypeptide: Homoserine O-acetyltransferase (373 aa).

Residues 52 to 356 (NVVMVLHALT…VYGHDGFLVE (305 aa)) enclose the AB hydrolase-1 domain. Ser157 serves as the catalytic Nucleophile. A substrate-binding site is contributed by Arg227. Residues Asp320 and His350 contribute to the active site. Position 351 (Asp351) interacts with substrate.

Belongs to the AB hydrolase superfamily. MetX family. In terms of assembly, homodimer.

Its subcellular location is the cytoplasm. The catalysed reaction is L-homoserine + acetyl-CoA = O-acetyl-L-homoserine + CoA. It functions in the pathway amino-acid biosynthesis; L-methionine biosynthesis via de novo pathway; O-acetyl-L-homoserine from L-homoserine: step 1/1. In terms of biological role, transfers an acetyl group from acetyl-CoA to L-homoserine, forming acetyl-L-homoserine. The polypeptide is Homoserine O-acetyltransferase (Mycobacterium sp. (strain KMS)).